Reading from the N-terminus, the 131-residue chain is Translation initiation factor 5A (131 aa).

Position 37 is a hypusine (Lys-37).

This sequence belongs to the eIF-5A family.

The protein localises to the cytoplasm. In terms of biological role, functions by promoting the formation of the first peptide bond. The polypeptide is Translation initiation factor 5A (eIF5A) (Methanococcus maripaludis (strain C6 / ATCC BAA-1332)).